The sequence spans 333 residues: Ferredoxin--NADP reductase (333 aa).

The FAD site is built by Asp-32, Gln-40, Tyr-45, Ala-85, Phe-119, Asp-285, and Thr-326.

It belongs to the ferredoxin--NADP reductase type 2 family. In terms of assembly, homodimer. FAD is required as a cofactor.

The enzyme catalyses 2 reduced [2Fe-2S]-[ferredoxin] + NADP(+) + H(+) = 2 oxidized [2Fe-2S]-[ferredoxin] + NADPH. The polypeptide is Ferredoxin--NADP reductase (Neorickettsia sennetsu (strain ATCC VR-367 / Miyayama) (Ehrlichia sennetsu)).